The primary structure comprises 127 residues: Glycine cleavage system H protein (127 aa).

Residues 24-105 (TLTIGITDLA…AYDAWLFKIK (82 aa)) enclose the Lipoyl-binding domain. At Lys65 the chain carries N6-lipoyllysine.

The protein belongs to the GcvH family. The glycine cleavage system is composed of four proteins: P, T, L and H. The cofactor is (R)-lipoate.

The glycine cleavage system catalyzes the degradation of glycine. The H protein shuttles the methylamine group of glycine from the P protein to the T protein. The polypeptide is Glycine cleavage system H protein (Ralstonia nicotianae (strain ATCC BAA-1114 / GMI1000) (Ralstonia solanacearum)).